A 76-amino-acid chain; its full sequence is Demidefensin-3 (76 aa).

An N-terminal signal peptide occupies residues Met-1–Ala-22. Residues Arg-23–Leu-64 constitute a propeptide that is removed on maturation. The tract at residues Ala-25–His-45 is disordered. Positions Ala-30 to Ala-44 are enriched in low complexity. A disulfide bridge links Cys-68 with Cys-73. Residues Arg-74–Leu-76 constitute a propeptide that is removed on maturation.

Belongs to the alpha-defensin family. Theta subfamily. Forms a cyclic homodimer; disulfide-linked. This is a cyclic peptide.

Has antimicrobial activities against bacteria and fungi. The polypeptide is Demidefensin-3 (Macaca mulatta (Rhesus macaque)).